Here is a 284-residue protein sequence, read N- to C-terminus: Protein phosphatase 1 regulatory subunit 3B (284 aa).

A PP1-binding motif motif is present at residues 61 to 64 (RVSF). The CBM21 domain occupies 124–232 (RNRLQTNHVC…SNKGKNYRIT (109 aa)). S260 carries the post-translational modification Phosphoserine.

In terms of assembly, interacts with glycogen, PPP1CC catalytic subunit of PP1 and PYGL. Associates with glycogen particles. Forms complexes with debranching enzyme, glycogen phosphorylase, glycogen synthase and phosphorylase kinase which is necessary for its regulation of PP1 activity. In terms of tissue distribution, highly expressed in liver. Moderately expressed in kidney, heart, testis, spleen and lung. Weakly expressed in skeletal muscle (at protein level). Expressed predominantly in liver. Expressed moderately in heart. Expressed weakly in lung, kidney, spleen and skeletal muscle.

Functionally, acts as a glycogen-targeting subunit for phosphatase PP1. Facilitates interaction of the PP1 with enzymes of the glycogen metabolism and regulates its activity. Suppresses the rate at which PP1 dephosphorylates (inactivates) glycogen phosphorylase and enhances the rate at which it activates glycogen synthase and therefore limits glycogen breakdown. Its activity is inhibited by PYGL, resulting in inhibition of the glycogen synthase and glycogen phosphorylase phosphatase activities of PP1. Dramatically increases basal and insulin-stimulated glycogen synthesis upon overexpression in hepatocytes. The chain is Protein phosphatase 1 regulatory subunit 3B (Ppp1r3b) from Rattus norvegicus (Rat).